The primary structure comprises 453 residues: UDP-N-acetylmuramoylalanine--D-glutamate ligase (453 aa).

117-123 (GANGKST) contacts ATP.

This sequence belongs to the MurCDEF family.

It is found in the cytoplasm. It catalyses the reaction UDP-N-acetyl-alpha-D-muramoyl-L-alanine + D-glutamate + ATP = UDP-N-acetyl-alpha-D-muramoyl-L-alanyl-D-glutamate + ADP + phosphate + H(+). It functions in the pathway cell wall biogenesis; peptidoglycan biosynthesis. Functionally, cell wall formation. Catalyzes the addition of glutamate to the nucleotide precursor UDP-N-acetylmuramoyl-L-alanine (UMA). This chain is UDP-N-acetylmuramoylalanine--D-glutamate ligase, found in Methylobacillus flagellatus (strain ATCC 51484 / DSM 6875 / VKM B-1610 / KT).